The primary structure comprises 247 residues: uncharacterized protein (247 aa).

6 consecutive transmembrane segments (helical) span residues 19–39, 73–93, 106–126, 155–175, 196–216, and 217–237; these read IFFT…SIMF, FFTS…AFFI, FLSF…YFII, YIQF…CPLF, YIYF…ILSQ, and FFLF…SCFY.

This sequence belongs to the TatC family.

The protein localises to the mitochondrion membrane. This is an uncharacterized protein from Nephroselmis olivacea (Green alga).